The following is a 65-amino-acid chain: Chymotrypsin/elastase isoinhibitors 2 to 5 (65 aa).

5 cysteine pairs are disulfide-bonded: cysteine 4-cysteine 37, cysteine 13-cysteine 32, cysteine 16-cysteine 28, cysteine 20-cysteine 59, and cysteine 39-cysteine 53. Positions 4–59 (CGKNEVWTECTGCELKCGQDEKTPCALMCRPPSCECTPGRGMRRTHDGKCVPVSEC) constitute a TIL domain.

Belongs to the serine protease inhibitor-like (TIL domain-containing) family.

The protein resides in the secreted. Its function is as follows. Defends the organism against the host's proteinases. The protein is Chymotrypsin/elastase isoinhibitors 2 to 5 of Ascaris suum (Pig roundworm).